We begin with the raw amino-acid sequence, 138 residues long: Holo-[acyl-carrier-protein] synthase (138 aa).

Residues Asp8 and Glu56 each coordinate Mg(2+).

The protein belongs to the P-Pant transferase superfamily. AcpS family. It depends on Mg(2+) as a cofactor.

The protein resides in the cytoplasm. It catalyses the reaction apo-[ACP] + CoA = holo-[ACP] + adenosine 3',5'-bisphosphate + H(+). In terms of biological role, transfers the 4'-phosphopantetheine moiety from coenzyme A to a Ser of acyl-carrier-protein. This is Holo-[acyl-carrier-protein] synthase from Clostridium novyi (strain NT).